We begin with the raw amino-acid sequence, 89 residues long: Putative regulatory protein CLL_A1210 (89 aa).

Belongs to the RemA family.

The chain is Putative regulatory protein CLL_A1210 from Clostridium botulinum (strain Eklund 17B / Type B).